Reading from the N-terminus, the 582-residue chain is Acylamino-acid-releasing enzyme (582 aa).

Residues S445, D524, and H556 each act as charge relay system in the active site.

This sequence belongs to the peptidase S9C family.

It localises to the cytoplasm. The catalysed reaction is Cleavage of an N-acetyl or N-formyl amino acid from the N-terminus of a polypeptide.. Functionally, this enzyme catalyzes the hydrolysis of the N-terminal peptide bond of an N-acetylated peptide to generate an N-acetylated amino acid and a peptide with a free N-terminus. This Aeropyrum pernix (strain ATCC 700893 / DSM 11879 / JCM 9820 / NBRC 100138 / K1) protein is Acylamino-acid-releasing enzyme.